The primary structure comprises 297 residues: HTH-type transcriptional regulator ArgP (297 aa).

Residues 4–60 (PDYRTLQALDAVIRERGFERAAQKLCITQSAVSQRIKQLENMFGQPLLVRTVPPRPT) enclose the HTH lysR-type domain. Residues 21-40 (FERAAQKLCITQSAVSQRIK) constitute a DNA-binding region (H-T-H motif).

The protein belongs to the LysR transcriptional regulatory family. In terms of assembly, homodimer.

Controls the transcription of genes involved in arginine and lysine metabolism. This chain is HTH-type transcriptional regulator ArgP, found in Escherichia coli O7:K1 (strain IAI39 / ExPEC).